Here is a 347-residue protein sequence, read N- to C-terminus: Uroporphyrinogen decarboxylase (347 aa).

Substrate contacts are provided by residues 23 to 27 (RQAGR), Asp73, Tyr150, Thr205, and His323.

It belongs to the uroporphyrinogen decarboxylase family. Homodimer.

The protein localises to the cytoplasm. The catalysed reaction is uroporphyrinogen III + 4 H(+) = coproporphyrinogen III + 4 CO2. Its pathway is porphyrin-containing compound metabolism; protoporphyrin-IX biosynthesis; coproporphyrinogen-III from 5-aminolevulinate: step 4/4. Functionally, catalyzes the decarboxylation of four acetate groups of uroporphyrinogen-III to yield coproporphyrinogen-III. The polypeptide is Uroporphyrinogen decarboxylase (Ruthia magnifica subsp. Calyptogena magnifica).